A 156-amino-acid polypeptide reads, in one-letter code: 2-C-methyl-D-erythritol 2,4-cyclodiphosphate synthase (156 aa).

2 residues coordinate a divalent metal cation: Asp10 and His12. Residues 10-12 and 36-37 each bind 4-CDP-2-C-methyl-D-erythritol 2-phosphate; these read DSH and HS. Residue His44 coordinates a divalent metal cation. Residues 58–60 and 63–67 each bind 4-CDP-2-C-methyl-D-erythritol 2-phosphate; these read DIG and FKDTD.

Belongs to the IspF family. In terms of assembly, homotrimer. A divalent metal cation is required as a cofactor.

It catalyses the reaction 4-CDP-2-C-methyl-D-erythritol 2-phosphate = 2-C-methyl-D-erythritol 2,4-cyclic diphosphate + CMP. It functions in the pathway isoprenoid biosynthesis; isopentenyl diphosphate biosynthesis via DXP pathway; isopentenyl diphosphate from 1-deoxy-D-xylulose 5-phosphate: step 4/6. Involved in the biosynthesis of isopentenyl diphosphate (IPP) and dimethylallyl diphosphate (DMAPP), two major building blocks of isoprenoid compounds. Catalyzes the conversion of 4-diphosphocytidyl-2-C-methyl-D-erythritol 2-phosphate (CDP-ME2P) to 2-C-methyl-D-erythritol 2,4-cyclodiphosphate (ME-CPP) with a corresponding release of cytidine 5-monophosphate (CMP). This is 2-C-methyl-D-erythritol 2,4-cyclodiphosphate synthase from Aquifex aeolicus (strain VF5).